We begin with the raw amino-acid sequence, 456 residues long: Probable glycine dehydrogenase (decarboxylating) subunit 1 (456 aa).

Belongs to the GcvP family. N-terminal subunit subfamily. As to quaternary structure, the glycine cleavage system is composed of four proteins: P, T, L and H. In this organism, the P 'protein' is a heterodimer of two subunits.

It carries out the reaction N(6)-[(R)-lipoyl]-L-lysyl-[glycine-cleavage complex H protein] + glycine + H(+) = N(6)-[(R)-S(8)-aminomethyldihydrolipoyl]-L-lysyl-[glycine-cleavage complex H protein] + CO2. Functionally, the glycine cleavage system catalyzes the degradation of glycine. The P protein binds the alpha-amino group of glycine through its pyridoxal phosphate cofactor; CO(2) is released and the remaining methylamine moiety is then transferred to the lipoamide cofactor of the H protein. This is Probable glycine dehydrogenase (decarboxylating) subunit 1 from Legionella pneumophila subsp. pneumophila (strain Philadelphia 1 / ATCC 33152 / DSM 7513).